An 895-amino-acid chain; its full sequence is Androgen receptor (895 aa).

Positions 1–533 are modulating; it reads MEVQLGLGRV…PIDYYFPPQK (533 aa). The interval 1-562 is interaction with ZNF318; that stretch reads MEVQLGLGRV…GSCKVFFKRA (562 aa). 2 disordered regions span residues 33 to 155 and 175 to 211; these read VIQN…PTFP and QLLQ…YLGG. 2 stretches are compositionally biased toward low complexity: residues 44-81 and 175-200; these read AASA…GSPQ and QLLQ…ASGA. Residue serine 66 is modified to Phosphoserine; by CDK9. Serine 79 is modified (phosphoserine). The segment covering 201–211 has biased composition (polar residues); that stretch reads PTSSKDNYLGG. At tyrosine 208 the chain carries Phosphotyrosine; by CSK. Position 241 is a phosphoserine (serine 241). Phosphotyrosine; by CSK and TNK2 is present on tyrosine 252. Phosphotyrosine; by CSK occurs at positions 292, 331, 342, and 347. A Phosphotyrosine; by CSK and TNK2 modification is found at tyrosine 348. A Glycyl lysine isopeptide (Lys-Gly) (interchain with G-Cter in SUMO) cross-link involves residue lysine 371. Tyrosine 378 is modified (phosphotyrosine; by CSK). Residue lysine 496 forms a Glycyl lysine isopeptide (Lys-Gly) (interchain with G-Cter in SUMO) linkage. A phosphotyrosine; by CSK mark is found at tyrosine 510 and tyrosine 527. The interval 527-894 is interaction with LPXN; the sequence is YYFPPQKTCL…GKVKPIYFHT (368 aa). Positions 534–607 form a DNA-binding region, nuclear receptor; sequence TCLICGDEAS…AGMTLGARKL (74 aa). 2 NR C4-type zinc fingers span residues 535 to 555 and 571 to 595; these read CLIC…CGSC and CASR…LRKC. The tract at residues 547–637 is interaction with HIPK3; it reads YGALTCGSCK…TEETAQKLTV (91 aa). The interaction with CCAR1 stretch occupies residues 567 to 894; that stretch reads QKYLCASRND…GKVKPIYFHT (328 aa). Positions 600–894 are interaction with KAT7; that stretch reads MTLGARKLKK…GKVKPIYFHT (295 aa). Residue serine 626 is modified to Phosphoserine; by STK4/MST1. Residues 644–875 form the NR LBD domain; it reads ECQPIFLNVL…DFPEMMAEII (232 aa). Residues asparagine 681 and arginine 728 each coordinate 17beta-hydroxy-5alpha-androstan-3-one. Glycyl lysine isopeptide (Lys-Gly) (interchain with G-Cter in ubiquitin) cross-links involve residues lysine 821 and lysine 823. 17beta-hydroxy-5alpha-androstan-3-one is bound at residue threonine 853. Tyrosine 891 carries the phosphotyrosine; by CSK modification.

It belongs to the nuclear hormone receptor family. NR3 subfamily. As to quaternary structure, binds DNA as a homodimer. Part of a ternary complex containing AR, EFCAB6/DJBP and PARK7. Interacts with HIPK3 and NR0B2 in the presence of androgen. The ligand binding domain interacts with KAT7/HBO1 in the presence of dihydrotestosterone. Interacts with EFCAB6/DJBP, PQBP1, RANBP9, RBAK, SPDEF, SRA1, TGFB1I1 and RREB1. Interacts with ZMIZ1/ZIMP10 and ZMIZ2/ZMIP7 which both enhance its transactivation activity. Interacts with SLC30A9 and RAD54L2/ARIP4. Interacts with MACROD1 (via macro domain). Interacts via the ligand-binding domain with LXXLL and FXXLF motifs from NCOA1, NCOA2, NCOA3 and MAGEA11. Interacts (via nuclear receptor DNA binding domain and nuclear receptor ligand binding domain) with NCOA4. The AR N-terminal poly-Gln region binds Ran resulting in enhancement of AR-mediated transactivation. Ran-binding decreases as the poly-Gln length increases. Interacts with HIP1 (via coiled coil domain). Interacts (via ligand-binding domain) with TRIM68. Interacts with TNK2. Interacts with USP26. Interacts with RNF6. Interacts (regulated by RNF6 probably through polyubiquitination) with RNF14; regulates AR transcriptional activity. Interacts with PRMT2 and TRIM24. Interacts with RACK1. Interacts with RANBP10; this interaction enhances dihydrotestosterone-induced AR transcriptional activity. Interacts with PRPF6 in a hormone-independent way; this interaction enhances dihydrotestosterone-induced AR transcriptional activity. Interacts with STK4/MST1. Interacts with ZIPK/DAPK3. Interacts with LPXN. Interacts with MAK. Part of a complex containing AR, MAK and NCOA3. Interacts with CRY1. Interacts with CCAR1 and GATA2. Interacts with ZNF318. Interacts with BUD31. Interacts with ARID4A. Interacts with ARID4B. Interacts (via NR LBD domain) with ZBTB7A; the interaction is direct and androgen-dependent. Interacts with NCOR1. Interacts with NCOR2. Interacts with CRY2 in a ligand-dependent manner. In terms of processing, phosphorylated in prostate cancer cells in response to several growth factors including EGF. Phosphorylation is induced by c-Src kinase (CSK). Tyr-510 is one of the major phosphorylation sites and an increase in phosphorylation and Src kinase activity is associated with prostate cancer progression. Phosphorylation by TNK2 enhances the DNA-binding and transcriptional activity. Phosphorylation at Ser-66 by CDK9 regulates AR promoter selectivity and cell growth. Post-translationally, sumoylated on Lys-371 (major) and Lys-496. Ubiquitinated. Deubiquitinated by USP26. 'Lys-6' and 'Lys-27'-linked polyubiquitination by RNF6 modulates AR transcriptional activity and specificity. Palmitoylated by ZDHHC7 and ZDHHC21. Palmitoylation is required for plasma membrane targeting and for rapid intracellular signaling via ERK and AKT kinases and cAMP generation.

The protein localises to the nucleus. The protein resides in the cytoplasm. Steroid hormone receptors are ligand-activated transcription factors that regulate eukaryotic gene expression and affect cellular proliferation and differentiation in target tissues. Transcription factor activity is modulated by bound coactivator and corepressor proteins like ZBTB7A that recruits NCOR1 and NCOR2 to the androgen response elements/ARE on target genes, negatively regulating androgen receptor signaling and androgen-induced cell proliferation. Transcription activation is also down-regulated by NR0B2. Activated, but not phosphorylated, by HIPK3 and ZIPK/DAPK3. The sequence is that of Androgen receptor (AR) from Papio hamadryas (Hamadryas baboon).